Reading from the N-terminus, the 95-residue chain is Co-chaperonin GroES (95 aa).

The protein belongs to the GroES chaperonin family. In terms of assembly, heptamer of 7 subunits arranged in a ring. Interacts with the chaperonin GroEL.

It is found in the cytoplasm. In terms of biological role, together with the chaperonin GroEL, plays an essential role in assisting protein folding. The GroEL-GroES system forms a nano-cage that allows encapsulation of the non-native substrate proteins and provides a physical environment optimized to promote and accelerate protein folding. GroES binds to the apical surface of the GroEL ring, thereby capping the opening of the GroEL channel. This is Co-chaperonin GroES from Rickettsia prowazekii (strain Madrid E).